Here is a 125-residue protein sequence, read N- to C-terminus: Cu-Zn superoxide dismutase-like protein (125 aa).

A disulfide bridge connects residues Cys-52 and Cys-102.

It belongs to the Cu-Zn superoxide dismutase family.

It is found in the host cytoplasm. In terms of biological role, virion protein with no enzymatic activity. This Bos taurus (Bovine) protein is Cu-Zn superoxide dismutase-like protein.